We begin with the raw amino-acid sequence, 513 residues long: Protein disulfide-isomerase (513 aa).

An N-terminal signal peptide occupies residues 1–25 (MAISKVWISLLLALAVVLSAPAARA). Residues 26–149 (EEAAAAEEAA…IVEYLKKQVG (124 aa)) form the Thioredoxin 1 domain. Active-site nucleophile residues include Cys-67 and Cys-70. Cys-67 and Cys-70 form a disulfide bridge. N-linked (GlcNAc...) asparagine glycosylation occurs at Asn-282. One can recognise a Thioredoxin 2 domain in the interval 369–488 (FRKSEPIPEA…IVDYIRKNKE (120 aa)). Active-site nucleophile residues include Cys-411 and Cys-414. An intrachain disulfide couples Cys-411 to Cys-414. Residues 491 to 507 (GQAAAATEKAAEPAATE) are compositionally biased toward low complexity. Residues 491 to 513 (GQAAAATEKAAEPAATEPLKDEL) are disordered. A Prevents secretion from ER motif is present at residues 510–513 (KDEL).

The protein belongs to the protein disulfide isomerase family.

The protein resides in the endoplasmic reticulum lumen. It catalyses the reaction Catalyzes the rearrangement of -S-S- bonds in proteins.. In terms of biological role, participates in the folding of proteins containing disulfide bonds, may be involved in glycosylation, prolyl hydroxylation and triglyceride transfer. The polypeptide is Protein disulfide-isomerase (PDI) (Hordeum vulgare (Barley)).